We begin with the raw amino-acid sequence, 288 residues long: uncharacterized protein (288 aa).

This is an uncharacterized protein from Mycobacterium tuberculosis (strain CDC 1551 / Oshkosh).